A 379-amino-acid polypeptide reads, in one-letter code: L-lactate dehydrogenase (379 aa).

The FMN hydroxy acid dehydrogenase domain occupies 1-379 (MIISASTDYR…IGRDSLVSLP (379 aa)). Tyr-24 serves as a coordination point for substrate. Residues Ser-106 and Gln-127 each contribute to the FMN site. Tyr-129 serves as a coordination point for substrate. FMN is bound at residue Thr-155. Arg-164 lines the substrate pocket. Lys-251 provides a ligand contact to FMN. Catalysis depends on His-275, which acts as the Proton acceptor. Arg-278 serves as a coordination point for substrate. 306 to 330 (DSGIRTGLDVVRMLALGADTVLLGR) contacts FMN.

The protein belongs to the FMN-dependent alpha-hydroxy acid dehydrogenase family. It depends on FMN as a cofactor.

The protein localises to the cell inner membrane. It carries out the reaction (S)-lactate + A = pyruvate + AH2. Catalyzes the conversion of L-lactate to pyruvate. Is coupled to the respiratory chain. In Stenotrophomonas maltophilia (strain K279a), this protein is L-lactate dehydrogenase.